Here is a 1168-residue protein sequence, read N- to C-terminus: Protein VARIATION IN COMPOUND TRIGGERED ROOT growth response (1168 aa).

A TIR domain is found at 10 to 171; the sequence is WVYDVFLSFS…EIANDVLAKL (162 aa). Glu-85 is an active-site residue. Positions 187–452 constitute an NB-ARC domain; that stretch reads EDHIANMSVL…ACLFNHVKVR (266 aa). LRR repeat units follow at residues 539–562, 606–629, 631–653, 676–699, 701–720, 721–744, 795–820, 839–865, 873–896, and 1065–1089; these read TSKVSEFCVHENAFKGMGNLLFLD, LRNLVKLEMHDSKLEKLWEGAMSF, CLKELDMWASKYLKEIPDLSKAT, LNKLLELNMEYCGELETLPTGFNL, SLDYLNFNECWKLRTFPEFA, TNISNLILAETSIEEYPSNLYFKN, LNNLERLDICYCRNLESLPTGINLES, STNIKYLDLDQTGIEEVPWQIENFFNL, CRELKCVSLNIFKLKHLGEVSFSN, and NVPLSQLNYDHVDINIHITSGDWRS.

This sequence belongs to the disease resistance NB-LRR family. Part of a nuclear protein complex made of VICTR, PAD4 and EDS1. Interacts (via TIR domain) with PAD4 and EDS1.

The protein localises to the cytoplasm. Its subcellular location is the nucleus. It catalyses the reaction NAD(+) + H2O = ADP-D-ribose + nicotinamide + H(+). Disease resistance protein of the TIR-NB-LRR-type. Part of the RPS6 locus that contains a cluster of several paralogous disease resistance (R) genes. Resistance proteins guard the plant against pathogens that contain an appropriate avirulence protein via an indirect interaction with this avirulence protein. That triggers a defense system including the hypersensitive response, which restricts the pathogen growth. Required for [5-(3,4-dichlorophenyl)furan-2-yl]-piperidine-1-ylmethanethione-(DFPM-) induced root growth arrest due to reduced number of meristem cells in the division zone of the primary root and inhibition of abscisic acid- (ABA-) induced stomatal closing. This chain is Protein VARIATION IN COMPOUND TRIGGERED ROOT growth response (VICTR), found in Arabidopsis thaliana (Mouse-ear cress).